Here is a 140-residue protein sequence, read N- to C-terminus: Auxin-responsive protein IAA26 (140 aa).

A disordered region spans residues 1–40 (MASYGDDGVELTELTLGPPGASARRARRGRKNGHPPPSSS). The short motif at 14 to 18 (LTLGP) is the EAR-like (transcriptional repression) element. Residues 24-33 (RRARRGRKNG) are compositionally biased toward basic residues. The PB1 domain occupies 45–130 (AYFVKVSMDG…SCKRMRVMRA (86 aa)).

Belongs to the Aux/IAA family. As to quaternary structure, homodimers and heterodimers. Expressed in roots, seedlings and flowers.

The protein localises to the nucleus. In terms of biological role, aux/IAA proteins are short-lived transcriptional factors that function as repressors of early auxin response genes at low auxin concentrations. This chain is Auxin-responsive protein IAA26 (IAA26), found in Oryza sativa subsp. japonica (Rice).